Here is a 492-residue protein sequence, read N- to C-terminus: Cell death protein 6 (492 aa).

Positions 19–29 (GNNINGEGSSS) are enriched in low complexity. The disordered stretch occupies residues 19–38 (GNNINGEGSSSPSTSAPQVK). A PID domain is found at 55 to 215 (INGHVEYVAR…YILKKKIVEL (161 aa)). Disordered regions lie at residues 241-385 (TGPP…STAA) and 464-492 (TGDL…NLKQ). Pro residues predominate over residues 244–268 (PIYPGLGPPALPLSPMPQGPPPNIP). Positions 300-312 (ASPSVSPASTSPS) are enriched in low complexity. Positions 313 to 333 (GPAPSIPPPRPPALAPPPPVA) are enriched in pro residues. Positions 373–383 (FDPRAGEKKST) are enriched in basic and acidic residues.

Belongs to the ced-6 family. In terms of assembly, homodimer. Interacts with ced-1. Interacts with E3 ubiquitin-protein ligase trim-21. As to expression, detected in gonadal sheath cells.

It is found in the cytoplasm. Its function is as follows. May function as an adapter protein in a pathway that mediates recognition and phagocytosis of apoptotic cells during normal development. Promotes engulfment of cells at both early and late stages of apoptosis. Required for actin reorganization around apoptotic cells. Plays a role in protecting dopaminergic neurons from oxidative stress-induced degeneration. Mediates recruitment of E3 ubiquitin-protein ligase trim-21 to the apoptotic cell surface which promotes ubiquitination and degradation of ced-1. The protein is Cell death protein 6 of Caenorhabditis elegans.